The primary structure comprises 476 residues: Zinc finger protein 563 (476 aa).

Residues 4–96 enclose the KRAB domain; the sequence is VAFEDVAVNF…IRDSIVNNSI (93 aa). Residues 101-125 form a C2H2-type 1; degenerate zinc finger; that stretch reads DPCQSAECEEVIMGHLSLNSHIRVD. The segment at 169 to 191 adopts a C2H2-type 2; degenerate zinc-finger fold; sequence YECKECGKTFSSRRNLRRHMVVQ. 10 C2H2-type zinc fingers span residues 197-219, 225-247, 253-275, 281-303, 309-331, 337-359, 365-387, 393-415, 421-443, and 449-471; these read YKCK…ERTH, YECK…ERMH, YECK…ERTH, YTCK…ETTH, YECK…MKRH, HKCK…ERIH, YECK…MIMH, HKCK…EKSH, YECK…MVMH, and NKCK…EKTH.

This sequence belongs to the krueppel C2H2-type zinc-finger protein family.

The protein resides in the nucleus. May be involved in transcriptional regulation. This chain is Zinc finger protein 563 (ZNF563), found in Homo sapiens (Human).